We begin with the raw amino-acid sequence, 622 residues long: 1-deoxy-D-xylulose-5-phosphate synthase (622 aa).

Thiamine diphosphate is bound by residues His-80 and 121-123; that span reads GHS. Residue Asp-152 coordinates Mg(2+). Thiamine diphosphate-binding positions include 153–154, Asn-181, Tyr-288, and Glu-370; that span reads GA. Asn-181 serves as a coordination point for Mg(2+).

This sequence belongs to the transketolase family. DXPS subfamily. As to quaternary structure, homodimer. It depends on Mg(2+) as a cofactor. The cofactor is thiamine diphosphate.

The enzyme catalyses D-glyceraldehyde 3-phosphate + pyruvate + H(+) = 1-deoxy-D-xylulose 5-phosphate + CO2. It functions in the pathway metabolic intermediate biosynthesis; 1-deoxy-D-xylulose 5-phosphate biosynthesis; 1-deoxy-D-xylulose 5-phosphate from D-glyceraldehyde 3-phosphate and pyruvate: step 1/1. Its function is as follows. Catalyzes the acyloin condensation reaction between C atoms 2 and 3 of pyruvate and glyceraldehyde 3-phosphate to yield 1-deoxy-D-xylulose-5-phosphate (DXP). In Shewanella amazonensis (strain ATCC BAA-1098 / SB2B), this protein is 1-deoxy-D-xylulose-5-phosphate synthase.